The primary structure comprises 331 residues: Nucleotide sugar transporter SLC35B4 (331 aa).

A run of 11 helical transmembrane segments spans residues 4 to 24 (AFAVGLVFAGCCSNVIFLELL), 30 to 50 (GCGNIVTFAQFLFIAVEGFLF), 59 to 79 (PAIPIRYYAIMVTMFFTVSVV), 92 to 112 (LHMIFRSGSLIANMILGIIIL), 124 to 144 (IALVSAGIFICTFMSAKQVTV), 153 to 173 (GFQAFAWWLLGIAALTFALLM), 201 to 221 (ALPLPGFIFLASDIYDHVVLF), 229 to 249 (VPVIGVTMPVMWFYLLMNVVT), 251 to 267 (YVCIRGVFILTTECTSL), 268 to 288 (TVTLVVTLRKFVSLIFSILYF), and 294 to 314 (MWHWLGTSFVFIGTLMYTEVW). Residues 326-331 (KDDKKD) carry the Mediates endoplasmic reticulum retention motif.

It belongs to the nucleotide-sugar transporter family. SLC35B subfamily.

The protein localises to the endoplasmic reticulum membrane. It catalyses the reaction UDP-N-acetyl-alpha-D-glucosamine(in) + UDP-alpha-D-glucuronate(out) = UDP-N-acetyl-alpha-D-glucosamine(out) + UDP-alpha-D-glucuronate(in). It carries out the reaction UDP-alpha-D-xylose(in) + UDP-alpha-D-glucuronate(out) = UDP-alpha-D-xylose(out) + UDP-alpha-D-glucuronate(in). In terms of biological role, antiporter that transports nucleotide sugars across the endoplasmic reticulum (ER) membrane in exchange for another nucleotide sugar. May couple UDP-alpha-D-glucuronate (UDP-GlcA) or UDP-alpha-D-xylose (UDP-Xyl) efflux to UDP-alpha-D-glucuronate (UDP-GlcA) influx into the ER lumen, which in turn stimulates glucuronidation and excretion of endobiotics and xenobiotics. The chain is Nucleotide sugar transporter SLC35B4 (Slc35b4) from Mus musculus (Mouse).